The following is a 229-amino-acid chain: UPF0319 protein Sbal223_2728 (229 aa).

A signal peptide spans 1 to 21 (MKSLLPISSLLVLLGSASAFA).

The protein belongs to the UPF0319 family.

This chain is UPF0319 protein Sbal223_2728, found in Shewanella baltica (strain OS223).